Here is a 305-residue protein sequence, read N- to C-terminus: MRVAFFGTPLWAVPVLDALRKRHQVVLVVSQPDKPQGRGLRPAPSPVARYAEAEGLPLLRPARLREEAFLEALRQAAPEVAVVAAYGKLIPKEALDIPPHGFLNLHPSLLPKYRGAAPVQRALLAGERETGVSIMRLDEGLDTGPLYAVWRTPILPDEDAVALGNRLRDKGVELLLEVLERLPELTPRPQEGEVSYAPPLSKEEGRLDFGESAEALYRRHRAVQPWPGSYFFHRGRRVKALRLRPEPGEGEPGVVARVGPEGVAVGTASGLLLLLEVQPEGRRAMPAADWARGYGVAPGTRLGQV.

108–111 (SLLP) serves as a coordination point for (6S)-5,6,7,8-tetrahydrofolate.

Belongs to the Fmt family.

The enzyme catalyses L-methionyl-tRNA(fMet) + (6R)-10-formyltetrahydrofolate = N-formyl-L-methionyl-tRNA(fMet) + (6S)-5,6,7,8-tetrahydrofolate + H(+). In terms of biological role, attaches a formyl group to the free amino group of methionyl-tRNA(fMet). The formyl group appears to play a dual role in the initiator identity of N-formylmethionyl-tRNA by promoting its recognition by IF2 and preventing the misappropriation of this tRNA by the elongation apparatus. This Thermus thermophilus (strain ATCC BAA-163 / DSM 7039 / HB27) protein is Methionyl-tRNA formyltransferase.